We begin with the raw amino-acid sequence, 95 residues long: Bombyxin F-1 (95 aa).

A signal peptide spans 1 to 19 (MKLVVIVLLVISVSILVSA). Disulfide bonds link cysteine 29–cysteine 82, cysteine 41–cysteine 95, and cysteine 81–cysteine 86. Residues 53-71 (NSDMVYEDSGMPELLPADT) constitute a propeptide, c peptide like.

This sequence belongs to the insulin family. Heterodimer of a B chain and an A chain linked by two disulfide bonds.

The protein resides in the secreted. This Bombyx mori (Silk moth) protein is Bombyxin F-1 (BBXF1).